Consider the following 89-residue polypeptide: UPF0213 protein HQ_3675A (89 aa).

Positions Asp3–Gln78 constitute a GIY-YIG domain.

Belongs to the UPF0213 family.

The protein is UPF0213 protein HQ_3675A of Haloquadratum walsbyi (strain DSM 16790 / HBSQ001).